Here is a 149-residue protein sequence, read N- to C-terminus: VapC ribonuclease PF0355 (149 aa).

The PINc domain maps to 8–122; the sequence is TFDSLALIKM…ITDDSKRYEP (115 aa). Asp-10 and Asp-98 together coordinate Mg(2+).

Belongs to the PINc/VapC protein family. Requires Mg(2+) as cofactor.

In terms of biological role, toxic component of a type II toxin-antitoxin (TA) system. An RNase. The chain is VapC ribonuclease PF0355 from Pyrococcus furiosus (strain ATCC 43587 / DSM 3638 / JCM 8422 / Vc1).